A 318-amino-acid polypeptide reads, in one-letter code: Ribosomal RNA small subunit methyltransferase H (318 aa).

S-adenosyl-L-methionine contacts are provided by residues 34 to 36 (GGY), Asp-52, Phe-79, Asp-100, and Gln-107. A disordered region spans residues 286 to 318 (GPAPDEARANPRARSAKLRAAARTAAPAWETVS). The segment covering 303–318 (LRAAARTAAPAWETVS) has biased composition (low complexity).

The protein belongs to the methyltransferase superfamily. RsmH family.

The protein localises to the cytoplasm. The enzyme catalyses cytidine(1402) in 16S rRNA + S-adenosyl-L-methionine = N(4)-methylcytidine(1402) in 16S rRNA + S-adenosyl-L-homocysteine + H(+). Its function is as follows. Specifically methylates the N4 position of cytidine in position 1402 (C1402) of 16S rRNA. This is Ribosomal RNA small subunit methyltransferase H from Paramagnetospirillum magneticum (strain ATCC 700264 / AMB-1) (Magnetospirillum magneticum).